A 919-amino-acid polypeptide reads, in one-letter code: Chitin synthase 1 (919 aa).

Disordered regions lie at residues 1-69 (MSYD…SFQT) and 109-134 (NLAS…ALGP). The span at 11-30 (GQGRDYARQQRQQRSYQLSD) shows a compositional bias: low complexity. N-linked (GlcNAc...) asparagine glycosylation is found at N187 and N556. 7 consecutive transmembrane segments (helical) span residues 594 to 614 (IVLL…SIII), 630 to 650 (LVVF…FLVL), 668 to 688 (IASF…SLWL), 713 to 733 (VLIA…ILYA), 742 to 762 (FPQY…YAFC), 843 to 863 (LVAF…NVNG), and 887 to 919 (IILW…FRKT).

The protein belongs to the chitin synthase family. Class III subfamily.

The protein localises to the cell membrane. It localises to the cytoplasmic vesicle membrane. The catalysed reaction is [(1-&gt;4)-N-acetyl-beta-D-glucosaminyl](n) + UDP-N-acetyl-alpha-D-glucosamine = [(1-&gt;4)-N-acetyl-beta-D-glucosaminyl](n+1) + UDP + H(+). In terms of biological role, polymerizes chitin, a structural polymer of the cell wall and septum, by transferring the sugar moiety of UDP-GlcNAc to the non-reducing end of the growing chitin polymer. This is Chitin synthase 1 from Mycosarcoma maydis (Corn smut fungus).